The sequence spans 150 residues: Globin-1 (150 aa).

Positions 11–150 (ALTAAEKATI…MICILLRSSY (140 aa)) constitute a Globin domain. Residues H74 and H106 each contribute to the heme b site.

Belongs to the globin family. As to quaternary structure, monomer.

The protein is Globin-1 of Petromyzon marinus (Sea lamprey).